We begin with the raw amino-acid sequence, 169 residues long: Der GTPase-activating protein YihI (169 aa).

Disordered stretches follow at residues 1 to 98 (MKPS…PQAE) and 144 to 169 (GLSY…LRGN). The span at 10–19 (SKGHAKARRK) shows a compositional bias: basic residues. Residues 20–30 (TREELDQEARD) are compositionally biased toward basic and acidic residues. The span at 31-40 (RKRQKKRRGH) shows a compositional bias: basic residues. A compositionally biased stretch (polar residues) spans 49-58 (GNTTSGSKGQ). The segment covering 147–159 (YDDDEEEEEDEKQ) has biased composition (acidic residues). The segment covering 160-169 (EDMMRLLRGN) has biased composition (basic and acidic residues).

The protein belongs to the YihI family. Interacts with Der.

A GTPase-activating protein (GAP) that modifies Der/EngA GTPase function. May play a role in ribosome biogenesis. The chain is Der GTPase-activating protein YihI from Escherichia coli O139:H28 (strain E24377A / ETEC).